A 247-amino-acid polypeptide reads, in one-letter code: 5-hydroxytryptamine receptor 2A (247 aa).

A topological domain (extracellular) is located at residue K1. A helical transmembrane segment spans residues 2–26 (LCAIWIYLDVLFSTASIMHLCAISL). C3 and C82 are oxidised to a cystine. D10 is a serotonin binding site. A DRY motif; important for ligand-induced conformation changes motif is present at residues 27 to 29 (DRY). Topologically, residues 27–46 (DRYVAIQNPIHHSRFNSRTK) are cytoplasmic. A helical membrane pass occupies residues 47–70 (AFLKIIAVWTISVGISMPVPVFGL). At 71–87 (QDDSKVFKEGSCLLADD) the chain is on the extracellular side. The helical transmembrane segment at 88–113 (NFVLIGSFVAFFIPLTIMVITYFLTI) threads the bilayer. Residues 114-177 (KSLQKEATLC…QSISNEQKAC (64 aa)) are Cytoplasmic-facing. Residue S135 is modified to Phosphoserine. A helical transmembrane segment spans residues 178 to 203 (KVLGIVFFLFVVMWCPFFVTNIMAVI). N198 serves as a coordination point for serotonin. An intrachain disulfide couples C204 to C208. Topologically, residues 204–211 (CKESCNED) are extracellular. A helical transmembrane segment spans residues 212–237 (VIGALLNVFVWIGYLSSAVNPLVYTL). The short motif at 231–235 (NPLVY) is the NPxxY motif; important for ligand-induced conformation changes and signaling element. At 238–247 (FNKTYRSAFA) the chain is on the cytoplasmic side.

This sequence belongs to the G-protein coupled receptor 1 family. Interacts (via C-terminus) with MPDZ and PATJ. May interact (via C-terminus) with MPP3, PRDX6, DLG4, DLG1, CASK, APBA1 and MAGI2. Interacts with GRM2 and DRD2; this may affect signaling. Detected in adult intestine, especially in mucosal epithelium, longitudinal and circular layers of muscularis externa and myenteric plexuses. Highly expressed in Paneth cells, and detected at lower levels in enterocytes (at protein level).

The protein resides in the cell membrane. The protein localises to the cell projection. It localises to the dendrite. It is found in the axon. Its subcellular location is the cytoplasmic vesicle. The protein resides in the membrane. The protein localises to the caveola. It localises to the presynapse. Its activity is regulated as follows. G-protein coupled receptor activity is regulated by lipids: oleamide increases HTR2A-mediated activity. In terms of biological role, G-protein coupled receptor for 5-hydroxytryptamine (serotonin). Also functions as a receptor for various drugs and psychoactive substances, including mescaline, psilocybin, 1-(2,5-dimethoxy-4-iodophenyl)-2-aminopropane (DOI) and lysergic acid diethylamide (LSD). Ligand binding causes a conformation change that triggers signaling via guanine nucleotide-binding proteins (G proteins) and modulates the activity of downstream effectors. HTR2A is coupled to G(q)/G(11) G alpha proteins and activates phospholipase C-beta, releasing diacylglycerol (DAG) and inositol 1,4,5-trisphosphate (IP3) second messengers that modulate the activity of phosphatidylinositol 3-kinase and promote the release of Ca(2+) ions from intracellular stores, respectively. Beta-arrestin family members inhibit signaling via G proteins and mediate activation of alternative signaling pathways. Affects neural activity, perception, cognition and mood. Plays a role in the regulation of behavior, including responses to anxiogenic situations and psychoactive substances. Plays a role in intestinal smooth muscle contraction, and may play a role in arterial vasoconstriction. In Cavia porcellus (Guinea pig), this protein is 5-hydroxytryptamine receptor 2A (HTR2A).